A 916-amino-acid polypeptide reads, in one-letter code: Protein translocase subunit SecA (916 aa).

ATP-binding positions include Gln87, 105-109 (GEGKT), and Asp507. Residues Cys900, Cys902, Cys911, and His912 each coordinate Zn(2+).

It belongs to the SecA family. As to quaternary structure, monomer and homodimer. Part of the essential Sec protein translocation apparatus which comprises SecA, SecYEG and auxiliary proteins SecDF-YajC and YidC. Zn(2+) is required as a cofactor.

It localises to the cell inner membrane. The protein resides in the cytoplasm. The catalysed reaction is ATP + H2O + cellular proteinSide 1 = ADP + phosphate + cellular proteinSide 2.. Functionally, part of the Sec protein translocase complex. Interacts with the SecYEG preprotein conducting channel. Has a central role in coupling the hydrolysis of ATP to the transfer of proteins into and across the cell membrane, serving both as a receptor for the preprotein-SecB complex and as an ATP-driven molecular motor driving the stepwise translocation of polypeptide chains across the membrane. The chain is Protein translocase subunit SecA from Neisseria meningitidis serogroup A / serotype 4A (strain DSM 15465 / Z2491).